Here is a 548-residue protein sequence, read N- to C-terminus: CTP synthase (548 aa).

Residues methionine 1–leucine 267 form an amidoligase domain region. Serine 14 lines the CTP pocket. Residue serine 14 participates in UTP binding. ATP-binding positions include serine 15–leucine 20 and aspartate 72. Residues aspartate 72 and glutamate 141 each contribute to the Mg(2+) site. Residues aspartate 148–glutamate 150, lysine 188–glutamine 193, and lysine 224 contribute to the CTP site. Residues lysine 188–glutamine 193 and lysine 224 each bind UTP. A Glutamine amidotransferase type-1 domain is found at threonine 292–lysine 545. Glycine 354 lines the L-glutamine pocket. The Nucleophile; for glutamine hydrolysis role is filled by cysteine 381. L-glutamine contacts are provided by residues leucine 382–glutamine 385, glutamate 405, and arginine 473. Residues histidine 518 and glutamate 520 contribute to the active site.

It belongs to the CTP synthase family. As to quaternary structure, homotetramer.

The catalysed reaction is UTP + L-glutamine + ATP + H2O = CTP + L-glutamate + ADP + phosphate + 2 H(+). It carries out the reaction L-glutamine + H2O = L-glutamate + NH4(+). The enzyme catalyses UTP + NH4(+) + ATP = CTP + ADP + phosphate + 2 H(+). Its pathway is pyrimidine metabolism; CTP biosynthesis via de novo pathway; CTP from UDP: step 2/2. With respect to regulation, allosterically activated by GTP, when glutamine is the substrate; GTP has no effect on the reaction when ammonia is the substrate. The allosteric effector GTP functions by stabilizing the protein conformation that binds the tetrahedral intermediate(s) formed during glutamine hydrolysis. Inhibited by the product CTP, via allosteric rather than competitive inhibition. In terms of biological role, catalyzes the ATP-dependent amination of UTP to CTP with either L-glutamine or ammonia as the source of nitrogen. Regulates intracellular CTP levels through interactions with the four ribonucleotide triphosphates. This chain is CTP synthase, found in Oleidesulfovibrio alaskensis (strain ATCC BAA-1058 / DSM 17464 / G20) (Desulfovibrio alaskensis).